Here is a 791-residue protein sequence, read N- to C-terminus: MKKLTSLFPLLFLIPLLASCAEEKQVYIVYFGEHKGDKAFHEIEEHHHSYLQSVKESEEDARASLLYSYKHSINGFAAELTPDQASKLEKLAEVVSVFKSHPRKYEAHTTRSWEFVGLEEEETDSDVPRRKNDADDRFRVGRNFLKKAKHGDGIIVGVLDSGVWPESKSFNDKGMGPVPKSWKGICQTGVAFNSSHCNRKIIGARYYVKGYERYYGAFNATANKDFLSPRDPDGHGSHTASTAVGRRVLGASALGGFAKGSASGGAPLARLAIYKACWAKPNAEKVEGNICLEEDMLAAIDDAIADGVHVISISIGTTEPFPFTQDGIAMGALHAVKRNIVVAASAGNSGPKPGTLSNLAPWIITVGASTLDRAFVGGLVLGNGYTIKTDSITAFKMDKFAPLVYASNVVVPGIALNETSQCLPNSLKPELVSGKVVLCLRGAGSRIGKGMEVKRAGGAGMILGNIAANGNEVPSDSHFVPTAGVTPTVVDKILEYIKTDKNPKAFIKPGKTVYKYQAAPSMTGFSSRGPNVVDPNILKPDITAPGLYILAAWSGADSPSKMSVDQRVAGYNIYSGTSMSCPHVAGAIALLKAIHPKWSSAAIRSALMTTAWMTNDKKKPIQDTTGLPANPFALGSGHFRPTKAADPGLVYDASYRAYLLYGCSVNITNIDPTFKCPSKIPPGYNHNYPSIAVPNLKKTVTVKRTVTNVGTGNSTSTYLFSVKPPSGISVKAIPNILSFNRIGQKQRFKIVIKPLKNQVMNATEKGQYQFGWFSWTDKVHVVRSPIAVSLA.

Residues 1-20 form the signal peptide; that stretch reads MKKLTSLFPLLFLIPLLASC. The propeptide at 21-108 is activation peptide; that stretch reads AEEKQVYIVY…KSHPRKYEAH (88 aa). Residues 26–104 enclose the Inhibitor I9 domain; it reads VYIVYFGEHK…VSVFKSHPRK (79 aa). Residues 134–645 form the Peptidase S8 domain; the sequence is ADDRFRVGRN…SGHFRPTKAA (512 aa). Aspartate 160 acts as the Charge relay system in catalysis. 2 N-linked (GlcNAc...) asparagine glycosylation sites follow: asparagine 193 and asparagine 219. Residue histidine 235 is the Charge relay system of the active site. Positions 400 to 494 constitute a PA domain; that stretch reads FAPLVYASNV…VTPTVVDKIL (95 aa). A glycan (N-linked (GlcNAc...) asparagine) is linked at asparagine 417. Residue serine 578 is the Charge relay system of the active site. Asparagine 666, asparagine 713, and asparagine 761 each carry an N-linked (GlcNAc...) asparagine glycan.

Belongs to the peptidase S8 family.

It is found in the secreted. The protein is Subtilisin-like protease SBT5.6 of Arabidopsis thaliana (Mouse-ear cress).